Consider the following 104-residue polypeptide: UPF0235 protein M446_3939 (104 aa).

The protein belongs to the UPF0235 family.

This chain is UPF0235 protein M446_3939, found in Methylobacterium sp. (strain 4-46).